The primary structure comprises 281 residues: Foldase protein PrsA (281 aa).

Residues 1–18 (MKKWMMAAAVVSLMALSA) form the signal peptide. Cys-19 carries N-palmitoyl cysteine lipidation. Cys-19 carries the S-diacylglycerol cysteine lipid modification. A PpiC domain is found at 133 to 223 (KPKIRASHIL…YGYHIIKVTD (91 aa)).

This sequence belongs to the PrsA family.

Its subcellular location is the cell membrane. The catalysed reaction is [protein]-peptidylproline (omega=180) = [protein]-peptidylproline (omega=0). Functionally, plays a major role in protein secretion by helping the post-translocational extracellular folding of several secreted proteins. This Geobacillus kaustophilus (strain HTA426) protein is Foldase protein PrsA.